Consider the following 272-residue polypeptide: Orotidine 5'-phosphate decarboxylase (272 aa).

Catalysis depends on lysine 92, which acts as the Proton donor.

Belongs to the OMP decarboxylase family. Type 2 subfamily.

It carries out the reaction orotidine 5'-phosphate + H(+) = UMP + CO2. Its pathway is pyrimidine metabolism; UMP biosynthesis via de novo pathway; UMP from orotate: step 2/2. In Deinococcus radiodurans (strain ATCC 13939 / DSM 20539 / JCM 16871 / CCUG 27074 / LMG 4051 / NBRC 15346 / NCIMB 9279 / VKM B-1422 / R1), this protein is Orotidine 5'-phosphate decarboxylase (pyrF).